Reading from the N-terminus, the 378-residue chain is MPQPCLLMECESSPREEEIPPLFWGLDPVFLAFAKLYIKDILEMKESQQVPGTYFYNGHPIRRVDIMGAVISVKERETFYSYGVDDATGVINCVCWKKLSNAESSSDPAILSTARELSMTSQLKKLQETIEQKTRIGIGDIIRVRGSVRMFREEREICANIYYKVDDPVWNMQIARMLELPKLYQKVYDQPFRNPALQEEEALNNKDNLDLAGLTSLLSEKIKEFLQEKKMQSFYQQELETVESLQSLASRPVTHSTGSDQVELKDSGTSGVAQRVFKNALQLLQEKGLVFQRDSGSDKLYYVTTKDKDLQQKIYHIIKEDCQKPNHMEKGCHLLHILNCVHLNLRWDLSKAVLQRVLELLEDQSDIVSTADHYYAAF.

The tract at residues 8 to 195 is interaction with CTC1; that stretch reads MECESSPREE…KVYDQPFRNP (188 aa). Residues 64–165 constitute a DNA-binding region (OB); the sequence is VDIMGAVISV…EICANIYYKV (102 aa). Winged helix-turn-helix (wHTH) stretches follow at residues 201 to 305 and 306 to 378; these read EALN…YVTT and KDKD…YAAF.

Belongs to the STN1 family. As to quaternary structure, component of the CST complex, composed of TEN1/C17orf106, CTC1/C17orf68 and STN1; in the complex interacts directly with TEN1 and CTC1. Interacts with ACD/TPP1. Interacts with POT1 and POLA1.

The protein localises to the nucleus. It is found in the chromosome. Its subcellular location is the telomere. Functionally, component of the CST complex proposed to act as a specialized replication factor promoting DNA replication under conditions of replication stress or natural replication barriers such as the telomere duplex. The CST complex binds single-stranded DNA with high affinity in a sequence-independent manner, while isolated subunits bind DNA with low affinity by themselves. Initially the CST complex has been proposed to protect telomeres from DNA degradation. However, the CST complex has been shown to be involved in several aspects of telomere replication. The CST complex inhibits telomerase and is involved in telomere length homeostasis; it is proposed to bind to newly telomerase-synthesized 3' overhangs and to terminate telomerase action implicating the association with the ACD:POT1 complex thus interfering with its telomerase stimulation activity. The CST complex is also proposed to be involved in fill-in synthesis of the telomeric C-strand probably implicating recruitment and activation of DNA polymerase alpha. The CST complex facilitates recovery from many forms of exogenous DNA damage; seems to be involved in the re-initiation of DNA replication at repaired forks and/or dormant origins. Required for efficicient replication of the duplex region of the telomere. Promotes efficient replication of lagging-strand telomeres. Promotes general replication start following replication-fork stalling implicating new origin firing. May be in involved in C-strand fill-in during late S/G2 phase independent of its role in telomere duplex replication. The chain is CST complex subunit STN1 from Mus musculus (Mouse).